Here is a 392-residue protein sequence, read N- to C-terminus: Serpin B11 (392 aa).

Residues 341 to 365 (EEGTEAAAATGDSIAVKSLPMRAQF) form an RCL region.

The protein belongs to the serpin family. Ov-serpin subfamily. As to expression, detected in a restricted number of tissues, including lung, placenta, prostate, and tonsil.

Its subcellular location is the cytoplasm. Its function is as follows. Has no serine protease inhibitory activity, probably due to variants in the scaffold impairing conformational change. This is Serpin B11 (SERPINB11) from Homo sapiens (Human).